The following is a 71-amino-acid chain: Putative antitoxin VapB15 (71 aa).

Belongs to the UPF0330 family.

Its function is as follows. Possibly the antitoxin component of a type II toxin-antitoxin (TA) system. Its cognate toxin is VapC15 (Potential). The protein is Putative antitoxin VapB15 (vapB15) of Archaeoglobus fulgidus (strain ATCC 49558 / DSM 4304 / JCM 9628 / NBRC 100126 / VC-16).